Here is a 312-residue protein sequence, read N- to C-terminus: Probable carboxylesterase 7 (312 aa).

Met1 is modified (N-acetylmethionine). The short motif at 75–77 (HGG) is the Involved in the stabilization of the negatively charged intermediate by the formation of the oxyanion hole element. Residues Ser159, Asp255, and His287 contribute to the active site.

Belongs to the 'GDXG' lipolytic enzyme family. As to expression, expressed in leaves, stems, flowers and siliques.

The enzyme catalyses a carboxylic ester + H2O = an alcohol + a carboxylate + H(+). Its function is as follows. Carboxylesterase acting on esters with varying acyl chain length. This is Probable carboxylesterase 7 (CXE7) from Arabidopsis thaliana (Mouse-ear cress).